We begin with the raw amino-acid sequence, 504 residues long: Cobyric acid synthase (504 aa).

A GATase cobBQ-type domain is found at 254 to 442 (AIDVAVIRYP…MHDLFHNDMF (189 aa)). Cys-336 acts as the Nucleophile in catalysis. Residue His-434 is part of the active site.

This sequence belongs to the CobB/CobQ family. CobQ subfamily.

It functions in the pathway cofactor biosynthesis; adenosylcobalamin biosynthesis. In terms of biological role, catalyzes amidations at positions B, D, E, and G on adenosylcobyrinic A,C-diamide. NH(2) groups are provided by glutamine, and one molecule of ATP is hydrogenolyzed for each amidation. The chain is Cobyric acid synthase from Anoxybacillus flavithermus (strain DSM 21510 / WK1).